A 438-amino-acid chain; its full sequence is Acid phosphatase type 7 (438 aa).

The first 23 residues, 1 to 23, serve as a signal peptide directing secretion; the sequence is MSPFLGGWLFFCMLLPFSPGVQG. Fe cation is bound by residues Asp-141, Asp-170, and Tyr-173. Asp-170 lines the Zn(2+) pocket. Asn-205 is a Zn(2+) binding site. N-linked (GlcNAc...) asparagine glycosylation occurs at Asn-211. 2 residues coordinate Zn(2+): His-286 and His-333. His-335 serves as a coordination point for Fe cation. Residues Asn-350 and Asn-404 are each glycosylated (N-linked (GlcNAc...) asparagine).

This sequence belongs to the metallophosphoesterase superfamily. Purple acid phosphatase family. Fe cation is required as a cofactor. Requires Zn(2+) as cofactor.

The protein resides in the secreted. It carries out the reaction a phosphate monoester + H2O = an alcohol + phosphate. This is Acid phosphatase type 7 from Mus musculus (Mouse).